The chain runs to 361 residues: Phospho-N-acetylmuramoyl-pentapeptide-transferase (361 aa).

10 consecutive transmembrane segments (helical) span residues serine 17–glycine 37, glycine 66–isoleucine 86, threonine 90–isoleucine 110, leucine 129–threonine 149, isoleucine 162–leucine 182, glycine 197–threonine 217, valine 232–leucine 252, isoleucine 261–isoleucine 281, leucine 286–valine 306, and phenylalanine 340–isoleucine 360.

The protein belongs to the glycosyltransferase 4 family. MraY subfamily. Mg(2+) is required as a cofactor.

Its subcellular location is the cell inner membrane. The catalysed reaction is UDP-N-acetyl-alpha-D-muramoyl-L-alanyl-gamma-D-glutamyl-meso-2,6-diaminopimeloyl-D-alanyl-D-alanine + di-trans,octa-cis-undecaprenyl phosphate = di-trans,octa-cis-undecaprenyl diphospho-N-acetyl-alpha-D-muramoyl-L-alanyl-D-glutamyl-meso-2,6-diaminopimeloyl-D-alanyl-D-alanine + UMP. The protein operates within cell wall biogenesis; peptidoglycan biosynthesis. In terms of biological role, catalyzes the initial step of the lipid cycle reactions in the biosynthesis of the cell wall peptidoglycan: transfers peptidoglycan precursor phospho-MurNAc-pentapeptide from UDP-MurNAc-pentapeptide onto the lipid carrier undecaprenyl phosphate, yielding undecaprenyl-pyrophosphoryl-MurNAc-pentapeptide, known as lipid I. The protein is Phospho-N-acetylmuramoyl-pentapeptide-transferase of Fusobacterium nucleatum subsp. nucleatum (strain ATCC 25586 / DSM 15643 / BCRC 10681 / CIP 101130 / JCM 8532 / KCTC 2640 / LMG 13131 / VPI 4355).